The chain runs to 503 residues: uncharacterized protein (503 aa).

ABC transporter domains lie at 8-249 (VPVA…LGRD) and 261-499 (IVDQ…MSAI). 43 to 50 (GKNGAGKS) is an ATP binding site.

This sequence belongs to the ABC transporter superfamily.

Its function is as follows. Probably part of a binding-protein-dependent transport system YphDEF. Probably responsible for energy coupling to the transport system. This is an uncharacterized protein from Escherichia coli (strain K12).